Reading from the N-terminus, the 188-residue chain is MSIKSDKWIRRMAEQHGMIEPFEPGQVREADGRKIVSYGTSSYGYDIRCADEFKIFTNINSTIVDPKNFDEKSFVDFKGDVCIIPPNSFALARTMEYFRIPRSVLTICLGKSTYARCGIIVNVTPFEPEWEGYVTLEFSNTTPLPAKIYAGEGCAQVLFFESDEVCETSYADRGGKYQGQHGVTLPKA.

DCTP contacts are provided by residues 111–116 (KSTYAR), 135–137 (TLE), Gln156, Tyr170, and Gln180. The Proton donor/acceptor role is filled by Glu137.

This sequence belongs to the dCTP deaminase family. Homotrimer.

The enzyme catalyses dCTP + H2O + H(+) = dUTP + NH4(+). It functions in the pathway pyrimidine metabolism; dUMP biosynthesis; dUMP from dCTP (dUTP route): step 1/2. Its function is as follows. Catalyzes the deamination of dCTP to dUTP. This is dCTP deaminase from Cupriavidus pinatubonensis (strain JMP 134 / LMG 1197) (Cupriavidus necator (strain JMP 134)).